Reading from the N-terminus, the 327-residue chain is Phenylalanine--tRNA ligase alpha subunit (327 aa).

Position 252 (glutamate 252) interacts with Mg(2+).

The protein belongs to the class-II aminoacyl-tRNA synthetase family. Phe-tRNA synthetase alpha subunit type 1 subfamily. Tetramer of two alpha and two beta subunits. Requires Mg(2+) as cofactor.

Its subcellular location is the cytoplasm. The enzyme catalyses tRNA(Phe) + L-phenylalanine + ATP = L-phenylalanyl-tRNA(Phe) + AMP + diphosphate + H(+). The sequence is that of Phenylalanine--tRNA ligase alpha subunit from Shigella flexneri.